The sequence spans 53 residues: Sec-independent protein translocase protein TatA (53 aa).

The chain crosses the membrane as a helical span at residues 1–21 (MGMSFSHLLIVLLIIFVLFGA).

This sequence belongs to the TatA/E family. As to quaternary structure, the Tat system comprises two distinct complexes: a TatABC complex, containing multiple copies of TatA, TatB and TatC subunits, and a separate TatA complex, containing only TatA subunits. Substrates initially bind to the TatABC complex, which probably triggers association of the separate TatA complex to form the active translocon.

It localises to the cell inner membrane. Its function is as follows. Part of the twin-arginine translocation (Tat) system that transports large folded proteins containing a characteristic twin-arginine motif in their signal peptide across membranes. TatA could form the protein-conducting channel of the Tat system. The protein is Sec-independent protein translocase protein TatA of Rickettsia akari (strain Hartford).